A 594-amino-acid polypeptide reads, in one-letter code: Glomulin (594 aa).

Ala-2 is subject to N-acetylalanine. Residues 2-553 are alpha-helical region with structural similarity to HEAT repeats; sequence AVEELQSIIK…EEIPNMPPEM (552 aa). Residues 300-594 are important for interaction with RBX1; it reads IDQLPMVLSP…STSEENIGIK (295 aa).

Interacts with FKBP4 and FKBP1A. Isoform 1: Interacts with RBX1 (via RING domain). Identified in complexes that contain RBX1 plus one of the cullins CUL1, CUL2, CUL3, and CUL4A. Identified in a SCF complex composed of CUL1, RBX1, SKP1, FBXW7 and GLMN. Component of a SCF-like complex consisting of CUL7, RBX1, SKP1, FBXW8 and GLMN. Interacts with unphosphorylated MET and is released upon MET phosphorylation. Post-translationally, phosphorylated on tyrosine residues. In terms of tissue distribution, ubiquitous.

Regulatory component of cullin-RING-based SCF (SKP1-Cullin-F-box protein) E3 ubiquitin-protein ligase complexes. Inhibits E3 ubiquitin ligase activity by binding to RBX1 (via RING domain) and inhibiting its interaction with the E2 ubiquitin-conjugating enzyme CDC34. Inhibits RBX1-mediated neddylation of CUL1. Required for normal stability and normal cellular levels of key components of SCF ubiquitin ligase complexes, including FBXW7, RBX1, CUL1, CUL2, CUL3, CUL4A, and thereby contributes to the regulation of CCNE1 and MYC levels. Essential for normal development of the vasculature. Contributes to the regulation of RPS6KB1 phosphorylation. The chain is Glomulin (GLMN) from Homo sapiens (Human).